The chain runs to 464 residues: tRNA-2-methylthio-N(6)-dimethylallyladenosine synthase (464 aa).

The 118-residue stretch at 5–122 (RKLYVKSFGC…LPEMLARVRD (118 aa)) folds into the MTTase N-terminal domain. The [4Fe-4S] cluster site is built by cysteine 14, cysteine 50, cysteine 85, cysteine 163, cysteine 167, and cysteine 170. A Radical SAM core domain is found at 149–383 (KKRGPTAFVT…VLEASKTAFD (235 aa)). One can recognise a TRAM domain in the interval 384 to 446 (RACMGRRFDI…PNSLAGQVVD (63 aa)).

This sequence belongs to the methylthiotransferase family. MiaB subfamily. Monomer. The cofactor is [4Fe-4S] cluster.

The protein localises to the cytoplasm. The catalysed reaction is N(6)-dimethylallyladenosine(37) in tRNA + (sulfur carrier)-SH + AH2 + 2 S-adenosyl-L-methionine = 2-methylsulfanyl-N(6)-dimethylallyladenosine(37) in tRNA + (sulfur carrier)-H + 5'-deoxyadenosine + L-methionine + A + S-adenosyl-L-homocysteine + 2 H(+). In terms of biological role, catalyzes the methylthiolation of N6-(dimethylallyl)adenosine (i(6)A), leading to the formation of 2-methylthio-N6-(dimethylallyl)adenosine (ms(2)i(6)A) at position 37 in tRNAs that read codons beginning with uridine. The chain is tRNA-2-methylthio-N(6)-dimethylallyladenosine synthase from Azorhizobium caulinodans (strain ATCC 43989 / DSM 5975 / JCM 20966 / LMG 6465 / NBRC 14845 / NCIMB 13405 / ORS 571).